Here is a 120-residue protein sequence, read N- to C-terminus: NADH-ubiquinone oxidoreductase chain 3 (120 aa).

3 helical membrane passes run 6–26 (LLFF…LTWV), 63–83 (IVCV…PFFF), and 85–105 (FFLV…FVFY).

Belongs to the complex I subunit 3 family.

Its subcellular location is the mitochondrion membrane. The catalysed reaction is a ubiquinone + NADH + 5 H(+)(in) = a ubiquinol + NAD(+) + 4 H(+)(out). Core subunit of the mitochondrial membrane respiratory chain NADH dehydrogenase (Complex I) that is believed to belong to the minimal assembly required for catalysis. Complex I functions in the transfer of electrons from NADH to the respiratory chain. The immediate electron acceptor for the enzyme is believed to be ubiquinone. The sequence is that of NADH-ubiquinone oxidoreductase chain 3 (ND3) from Paramecium tetraurelia.